The sequence spans 87 residues: Small ribosomal subunit protein bS20 (87 aa).

The interval 1–26 (MANHKSAIKRHKQSQKRAARNRAAKT) is disordered.

Belongs to the bacterial ribosomal protein bS20 family.

Functionally, binds directly to 16S ribosomal RNA. This is Small ribosomal subunit protein bS20 from Nitratidesulfovibrio vulgaris (strain DSM 19637 / Miyazaki F) (Desulfovibrio vulgaris).